The sequence spans 362 residues: UDP-N-acetylglucosamine--N-acetylmuramyl-(pentapeptide) pyrophosphoryl-undecaprenol N-acetylglucosamine transferase (362 aa).

UDP-N-acetyl-alpha-D-glucosamine contacts are provided by residues Thr-15–Gly-17, Asn-127, Arg-165, Ser-191, Ile-247, Ala-266–Glu-271, and Gln-292.

This sequence belongs to the glycosyltransferase 28 family. MurG subfamily.

It is found in the cell inner membrane. It catalyses the reaction di-trans,octa-cis-undecaprenyl diphospho-N-acetyl-alpha-D-muramoyl-L-alanyl-D-glutamyl-meso-2,6-diaminopimeloyl-D-alanyl-D-alanine + UDP-N-acetyl-alpha-D-glucosamine = di-trans,octa-cis-undecaprenyl diphospho-[N-acetyl-alpha-D-glucosaminyl-(1-&gt;4)]-N-acetyl-alpha-D-muramoyl-L-alanyl-D-glutamyl-meso-2,6-diaminopimeloyl-D-alanyl-D-alanine + UDP + H(+). The protein operates within cell wall biogenesis; peptidoglycan biosynthesis. Its function is as follows. Cell wall formation. Catalyzes the transfer of a GlcNAc subunit on undecaprenyl-pyrophosphoryl-MurNAc-pentapeptide (lipid intermediate I) to form undecaprenyl-pyrophosphoryl-MurNAc-(pentapeptide)GlcNAc (lipid intermediate II). In Shewanella baltica (strain OS185), this protein is UDP-N-acetylglucosamine--N-acetylmuramyl-(pentapeptide) pyrophosphoryl-undecaprenol N-acetylglucosamine transferase.